The following is a 226-amino-acid chain: Glutathione S-transferase kappa 1 (226 aa).

Glutathione is bound by residues 15-17 (SPY), asparagine 53, and 199-200 (SD).

The protein belongs to the GST superfamily. Kappa family.

The enzyme catalyses RX + glutathione = an S-substituted glutathione + a halide anion + H(+). This Caenorhabditis elegans protein is Glutathione S-transferase kappa 1 (gstk-1).